The primary structure comprises 638 residues: MSEIIRVPDIGGDGEVIELLVKTGDLIEVEQGLVVLESAKASMEVPSPKAGVVKSVSVKLGDKLKEGDAIIELEPAAGAAAAPAEAAAVPAAPTQAVDEAEAPSPGASATPAPAAASQEVRVPDIGSAGKARVIEVLVKAGDQVQAEQSLIVLESDKASMEIPSPASGVVESVAIQLNAEVGTGDLILTLRTTGAQAQPTAPAAAAAASPAPAPLAPAAAGPQEVKVPDIGSAGKARVIEVLVKAGDQVQAEQSLIVLESDKASMEIPSPAAGVVESVAVQLNAEVGTGDQILTLRVAGAAPSGPRARGSPGQAAAAPGAAPAPAPVGAPSRNGAKVHAGPAVRQLAREFGVELAAINSTGPRGRILKEDVQAYVKAMMQKAKEAPAAGAASGAGIPPIPPVDFAKYGEIEEVPMTRLMQIGATNLHRSWLNVPHVTQFESADITELEAFRVAQKAVAEKAGVKLTVLPLLLKACAYLLKELPDFNSSLAPSGQALIRKKYVHIGFAVDTPDGLLVPVIRNVDQKSLLQLAAEAAELAEKARSKKLGADAMQGACFTISSLGHIGGTAFTPIVNAPEVAILGVSKASMQPVWDGKAFQPRLMLPLSLSYDHRVINGAAAARFTKRLGDLLADIRAILL.

Lipoyl-binding domains are found at residues 2-74 (SEII…IELE) and 117-191 (SQEV…LTLR). At K40 the chain carries N6-lipoyllysine. Low complexity predominate over residues 90-117 (PAAPTQAVDEAEAPSPGASATPAPAAAS). The interval 90-119 (PAAPTQAVDEAEAPSPGASATPAPAAASQE) is disordered. K157 is modified (N6-lipoyllysine). The interval 201-220 (APAAAAAASPAPAPLAPAAA) is disordered. A Lipoyl-binding 3 domain is found at 222–296 (PQEVKVPDIG…GTGDQILTLR (75 aa)). An N6-lipoyllysine modification is found at K262. Residues 301–320 (APSGPRARGSPGQAAAAPGA) show a composition bias toward low complexity. The segment at 301–336 (APSGPRARGSPGQAAAAPGAAPAPAPVGAPSRNGAK) is disordered. One can recognise a Peripheral subunit-binding (PSBD) domain in the interval 338 to 375 (HAGPAVRQLAREFGVELAAINSTGPRGRILKEDVQAYV). The interval 382-638 (AKEAPAAGAA…LLADIRAILL (257 aa)) is catalytic. The active site involves H611.

It belongs to the 2-oxoacid dehydrogenase family. Forms a 24-polypeptide structural core with octahedral symmetry. Requires (R)-lipoate as cofactor.

It carries out the reaction N(6)-[(R)-dihydrolipoyl]-L-lysyl-[protein] + acetyl-CoA = N(6)-[(R)-S(8)-acetyldihydrolipoyl]-L-lysyl-[protein] + CoA. The pyruvate dehydrogenase complex catalyzes the overall conversion of pyruvate to acetyl-CoA and CO(2). It contains multiple copies of three enzymatic components: pyruvate dehydrogenase (E1), dihydrolipoamide acetyltransferase (E2) and lipoamide dehydrogenase (E3). The sequence is that of Dihydrolipoyllysine-residue acetyltransferase component of pyruvate dehydrogenase complex from Azotobacter vinelandii.